The primary structure comprises 289 residues: Rhodopsin (289 aa).

Over 1 to 7 the chain is Extracellular; that stretch reads YLVNPAA. Residues 8–32 form a helical membrane-spanning segment; the sequence is YAAPGAYMFLLILVGFPVNFLTLYV. Residues 33–44 are Cytoplasmic-facing; sequence TLEHKKLRTPLN. Residues 45–67 form a helical membrane-spanning segment; that stretch reads YILLNLAVADLFMVLGGFTTTMY. Topologically, residues 68 to 81 are extracellular; the sequence is TSMHGYFVLGRLGC. A disulfide bridge links cysteine 81 with cysteine 158. Residues 82-104 traverse the membrane as a helical segment; sequence NLEGFFATLGGEIALWSLVVLAI. Residues 105–107 carry the 'Ionic lock' involved in activated form stabilization motif; the sequence is ERW. Residues 105–123 are Cytoplasmic-facing; the sequence is ERWIVVCKPISNFRFTEDH. A helical transmembrane segment spans residues 124–144; it reads AIMGLAFSWVMALTCAVPPLV. Over 145–173 the chain is Extracellular; it reads GWSRYIPEGMQCSCGVDYYTRAEGFNNES. N-linked (GlcNAc...) asparagine glycosylation occurs at asparagine 171. A helical transmembrane segment spans residues 174-195; sequence FVIYMFIVHFLIPLSNNFFCYG. Residues 196–223 are Cytoplasmic-facing; the sequence is RLLCAVKEAAAAQQESETTQRAEREVSR. The chain crosses the membrane as a helical span at residues 224–245; it reads MVVMMVVSFLMCWLPYASVAWY. Residues 246 to 257 lie on the Extracellular side of the membrane; sequence IFCNQGSEFGPI. Residues 258 to 279 form a helical membrane-spanning segment; it reads FMTLPAFFAKSSAIYNPLIYIC. An N6-(retinylidene)lysine modification is found at lysine 267. The Cytoplasmic segment spans residues 280–289; it reads MNKHVRHCMI.

The protein belongs to the G-protein coupled receptor 1 family. Opsin subfamily. Post-translationally, phosphorylated on some or all of the serine and threonine residues present in the C-terminal region. Contains one covalently linked retinal chromophore.

The protein resides in the membrane. Its subcellular location is the cell projection. It is found in the cilium. It localises to the photoreceptor outer segment. Photoreceptor required for image-forming vision at low light intensity. While most salt water fish species use retinal as chromophore, most freshwater fish use 3-dehydroretinal, or a mixture of retinal and 3-dehydroretinal. Light-induced isomerization of 11-cis to all-trans retinal triggers a conformational change that activates signaling via G-proteins. Subsequent receptor phosphorylation mediates displacement of the bound G-protein alpha subunit by arrestin and terminates signaling. This Cottocomephorus grewingkii (Baikal yellowfin) protein is Rhodopsin (rho).